The chain runs to 211 residues: tRNA (guanine-N(7)-)-methyltransferase (211 aa).

4 residues coordinate S-adenosyl-L-methionine: glutamate 44, aspartate 69, aspartate 96, and aspartate 118. Residue aspartate 118 is part of the active site. Lysine 122 is a binding site for substrate. The interaction with RNA stretch occupies residues 124–129; sequence KHEKRR. Substrate-binding positions include aspartate 154 and 191–194; that span reads TEYE.

The protein belongs to the class I-like SAM-binding methyltransferase superfamily. TrmB family.

The catalysed reaction is guanosine(46) in tRNA + S-adenosyl-L-methionine = N(7)-methylguanosine(46) in tRNA + S-adenosyl-L-homocysteine. Its pathway is tRNA modification; N(7)-methylguanine-tRNA biosynthesis. Its function is as follows. Catalyzes the formation of N(7)-methylguanine at position 46 (m7G46) in tRNA. In Streptococcus agalactiae serotype Ia (strain ATCC 27591 / A909 / CDC SS700), this protein is tRNA (guanine-N(7)-)-methyltransferase.